The sequence spans 215 residues: Ceramide-1-phosphate transfer protein (215 aa).

An N-acylsphingoid base 1-phosphate contacts are provided by D57, K61, R107, R111, and H151.

The protein belongs to the GLTP family.

Its subcellular location is the cytoplasm. The protein localises to the cytosol. It localises to the golgi apparatus. It is found in the trans-Golgi network membrane. The protein resides in the cell membrane. Its subcellular location is the endosome membrane. The protein localises to the nucleus outer membrane. It catalyses the reaction N-(hexadecanoyl)-sphing-4-enine-1-phosphate(in) = N-(hexadecanoyl)-sphing-4-enine-1-phosphate(out). It carries out the reaction N-(9Z-octadecenoyl)-sphing-4-enine-1-phosphate(in) = N-(9Z-octadecenoyl)-sphing-4-enine-1-phosphate(out). Mediates the intracellular transfer of ceramide-1-phosphate (C1P) between organelle membranes and the cell membrane. Required for normal structure of the Golgi stacks. Can bind phosphoceramides with a variety of aliphatic chains, but has a preference for lipids with saturated C16:0 or monounsaturated C18:1 aliphatic chains, and is inefficient with phosphoceramides containing lignoceryl (C24:0). Plays a role in the regulation of the cellular levels of ceramide-1-phosphate, and thereby contributes to the regulation of phospholipase PLA2G4A activity and the release of arachidonic acid. Has no activity with galactosylceramide, lactosylceramide, sphingomyelin, phosphatidylcholine, phosphatidic acid and ceramide. C1P transfer is stimulated by phosphatidylserine in C1P source vesicles. Regulates autophagy and pyroptosis, but not apoptosis. This Xenopus laevis (African clawed frog) protein is Ceramide-1-phosphate transfer protein (cptp).